Here is a 697-residue protein sequence, read N- to C-terminus: MALSPGELELIRSALGREPTEVEYALFRSHWSEHCSYKSTRMWLRRLPSKAPWVVRGPGTDAPLVEIAEGLYATFKIESHNHPSAVDPYNGAATGVGGIIRDILTVGARPIALLVNLHFGPPSHPHARWIAVNVIRGISDYGNRVGVPVVGGETWFHEDFTYTPIVLATCVGIVEKDGVPPGGAEPGDLIIVAGLGADKSGLGGSAFASKTLSEEAEEDLGAVQVADPLMGKKLIDLVREARSCVKFIKDLGGGGLATALAELAEWFQLGVVAELDKIHMADREMGPAEVLTSETQERMVFVTSPSKLECLERLLEKFEVPYSIVGRFTAEGRVVLKWRGEVVGDLPLSLVAKAPETPWPQEPYAPPPLPHVPEPPIEKAIDAVLSSPNVAFKQAIYERFDFDVGVRTVLKPGEGDAAVLKIYERGNLGLAVKGDANPRFTYLNPRLGAANAFIKAYRNVAVVGGRPLAAVDSINVGSPSRPSAYWQFVEAVEGLREAAEALGVPIVGGKVSLYNEYKGKPVAPTVAVVVLGVVEDVSKVNKAVWKEGDGVYVWGVTKDEVGGSEYLHRVHGLVAGQPPSIDYSVEKELAAVVRKWAGRLTGAKDVGLGGLAAALAKMAAASGIGADIDICKAPSTTARLDYLLFSESNGRFIAAGEEGPGTRVGAAGGDYFTLRCGSTIVYKRKVEELAELMSLKI.

H34 is an active-site residue. The ATP site is built by Y37 and K76. E78 is a Mg(2+) binding site. Substrate-binding positions include 79–82 (SHNH) and R101. H80 (proton acceptor) is an active-site residue. D102 provides a ligand contact to Mg(2+). Substrate is bound at residue Q224. D250 is a Mg(2+) binding site. 294–296 (ETQ) serves as a coordination point for substrate. D472 and G509 together coordinate ATP. S512 contributes to the substrate binding site.

The protein belongs to the FGAMS family. In terms of assembly, monomer. Part of the FGAM synthase complex composed of 1 PurL, 1 PurQ and 2 PurS subunits.

It is found in the cytoplasm. It carries out the reaction N(2)-formyl-N(1)-(5-phospho-beta-D-ribosyl)glycinamide + L-glutamine + ATP + H2O = 2-formamido-N(1)-(5-O-phospho-beta-D-ribosyl)acetamidine + L-glutamate + ADP + phosphate + H(+). The protein operates within purine metabolism; IMP biosynthesis via de novo pathway; 5-amino-1-(5-phospho-D-ribosyl)imidazole from N(2)-formyl-N(1)-(5-phospho-D-ribosyl)glycinamide: step 1/2. In terms of biological role, part of the phosphoribosylformylglycinamidine synthase complex involved in the purines biosynthetic pathway. Catalyzes the ATP-dependent conversion of formylglycinamide ribonucleotide (FGAR) and glutamine to yield formylglycinamidine ribonucleotide (FGAM) and glutamate. The FGAM synthase complex is composed of three subunits. PurQ produces an ammonia molecule by converting glutamine to glutamate. PurL transfers the ammonia molecule to FGAR to form FGAM in an ATP-dependent manner. PurS interacts with PurQ and PurL and is thought to assist in the transfer of the ammonia molecule from PurQ to PurL. The chain is Phosphoribosylformylglycinamidine synthase subunit PurL from Pyrobaculum aerophilum (strain ATCC 51768 / DSM 7523 / JCM 9630 / CIP 104966 / NBRC 100827 / IM2).